A 487-amino-acid polypeptide reads, in one-letter code: Glycogen synthase (487 aa).

Position 19 (lysine 19) interacts with ADP-alpha-D-glucose.

The protein belongs to the glycosyltransferase 1 family. Bacterial/plant glycogen synthase subfamily.

The catalysed reaction is [(1-&gt;4)-alpha-D-glucosyl](n) + ADP-alpha-D-glucose = [(1-&gt;4)-alpha-D-glucosyl](n+1) + ADP + H(+). It participates in glycan biosynthesis; glycogen biosynthesis. In terms of biological role, synthesizes alpha-1,4-glucan chains using ADP-glucose. The polypeptide is Glycogen synthase (Moorella thermoacetica (strain ATCC 39073 / JCM 9320)).